The sequence spans 335 residues: Zinc-type alcohol dehydrogenase-like protein SAV2186 (335 aa).

This sequence belongs to the zinc-containing alcohol dehydrogenase family. Quinone oxidoreductase subfamily.

This is Zinc-type alcohol dehydrogenase-like protein SAV2186 from Staphylococcus aureus (strain Mu50 / ATCC 700699).